A 644-amino-acid polypeptide reads, in one-letter code: uncharacterized protein (644 aa).

A disordered region spans residues 123–644 (VSQQIQHDQH…AVGKKKPTKK (522 aa)). Positions 133–155 (PQYNKHPQNNHHPQNTQHSQNNP) are enriched in low complexity. Residues 159-174 (NINESENKEDLSDRSS) show a composition bias toward basic and acidic residues. Residues 175-191 (DSANSEESHNSQYSQDS) show a composition bias toward polar residues. Residues 192 to 204 (GDSRNYQDSEDNK) are compositionally biased toward basic and acidic residues. Polar residues predominate over residues 216–233 (NKLIVQRLTNPKITPDTI). Composition is skewed to basic and acidic residues over residues 236–249 (SNKD…KDLS) and 256–279 (SIKD…KSKE). 2 stretches are compositionally biased toward acidic residues: residues 292–301 (DGDDLDDLGN) and 310–338 (SDYE…DDSN). Residues 367 to 400 (KSPSNSKKSKTNQKLSQSSKKISSKTITNSGSKS) are compositionally biased toward low complexity. The segment covering 447 to 476 (SDDSDNESDNESDNESNNDSDNETDSEIDD) has biased composition (acidic residues). Over residues 496-531 (PKTPMKPNNKTTSVSKPVSKPPVKSSIKNNTKNNKP) the composition is skewed to low complexity. Basic and acidic residues predominate over residues 544–558 (KQKDQSESQSDKDID). The segment covering 585 to 594 (PPKSVSLPSS) has biased composition (low complexity). The segment covering 607–630 (TAKTQNKSKSQPKTNGSKTSTKSI) has biased composition (polar residues).

This is an uncharacterized protein from Acanthamoeba polyphaga mimivirus (APMV).